Reading from the N-terminus, the 532-residue chain is 2,3-bisphosphoglycerate-independent phosphoglycerate mutase (532 aa).

Asp-15 and Ser-65 together coordinate Mn(2+). Catalysis depends on Ser-65, which acts as the Phosphoserine intermediate. Residues His-126, 156–157 (RD), Arg-188, Arg-194, 258–261 (RPDR), and Lys-331 each bind substrate. Residues Asp-398, His-402, Asp-439, His-440, and His-457 each coordinate Mn(2+).

It belongs to the BPG-independent phosphoglycerate mutase family. In terms of assembly, monomer. Requires Mn(2+) as cofactor.

It carries out the reaction (2R)-2-phosphoglycerate = (2R)-3-phosphoglycerate. Its pathway is carbohydrate degradation; glycolysis; pyruvate from D-glyceraldehyde 3-phosphate: step 3/5. Its function is as follows. Catalyzes the interconversion of 2-phosphoglycerate and 3-phosphoglycerate. This chain is 2,3-bisphosphoglycerate-independent phosphoglycerate mutase, found in Cyanothece sp. (strain PCC 7425 / ATCC 29141).